The primary structure comprises 1081 residues: Dyslexia-associated protein KIAA0319 homolog (1081 aa).

The N-terminal stretch at 1–22 (MVSPPGVLSSLLLLAAMAGGSS) is a signal peptide. Residues 23–99 (QQCSEGRTYS…PRTTGPIRSY (77 aa)) form the MANSC domain. Residues 23–964 (QQCSEGRTYS…WDGESNCEWS (942 aa)) lie on the Extracellular side of the membrane. Residues 168-331 (LQPSNQQDPR…VLTGLTPPPW (164 aa)) are disordered. A glycan (N-linked (GlcNAc...) asparagine) is linked at Asn196. Composition is skewed to polar residues over residues 197–206 (ATATGDNSAA) and 222–234 (EQLQALNESTWSP). Asn228 is a glycosylation site (N-linked (GlcNAc...) asparagine). The span at 236–255 (PGHSSISSVWPSSASPLPTE) shows a compositional bias: low complexity. N-linked (GlcNAc...) asparagine glycosylation is found at Asn272 and Asn302. 2 stretches are compositionally biased toward polar residues: residues 283–307 (HNPSPASLESSPATTEKNSNFTVTP) and 314–324 (TPTFPTSTVLT). 5 consecutive PKD domains span residues 345–436 (AVSA…VMPA), 444–533 (VAVV…IRDA), 539–629 (VANA…VQAE), 630–723 (NNQA…VKKE), and 729–820 (RAQA…VLPD). N-linked (GlcNAc...) asparagine glycosylation is found at Asn430, Asn507, Asn522, Asn545, and Asn560. The N-linked (GlcNAc...) asparagine glycan is linked to Asn742. The helical transmembrane segment at 965–985 (VFYVAALALTLTLLTGAVSWL) threads the bilayer. Over 986-1081 (CICCCRRRKR…VSFGYYSKDR (96 aa)) the chain is Cytoplasmic. The Endocytosis signal signature appears at 1004–1007 (YTIL). Position 1009 is a phosphoserine (Ser1009).

As to quaternary structure, homodimer. Interacts with AP2M1; required for clathrin-mediated endocytosis. Post-translationally, N-glycosylated. O-glycosylated. In terms of processing, shedding of the extracellular domain and intramembrane cleavage produce several proteolytic products. The intramembrane cleavage releases a soluble cytoplasmic polypeptide that translocates to the nucleolus.

The protein resides in the cell membrane. The protein localises to the early endosome membrane. Functionally, involved in neuronal migration during development of the cerebral neocortex. May function in a cell autonomous and a non-cell autonomous manner and play a role in appropriate adhesion between migrating neurons and radial glial fibers. May also regulate growth and differentiation of dendrites. The chain is Dyslexia-associated protein KIAA0319 homolog (Kiaa0319) from Mus musculus (Mouse).